The primary structure comprises 321 residues: Bifunctional ligase/repressor BirA (321 aa).

A DNA-binding region (H-T-H motif) is located at residues 22–41 (GEQLGETLGMSRAAINKHIQ). The BPL/LPL catalytic domain occupies 67 to 254 (LNAKQILGQL…ELRAALELFE (188 aa)). Residues 89–91 (STN), Gln112, 116–118 (RGR), and Lys183 contribute to the biotin site.

It belongs to the biotin--protein ligase family. In terms of assembly, monomer in solution. Interacts with BCCP. Homodimerizes to bind DNA. Interaction with the corepressor bio-5'-AMP increases dimerization.

It carries out the reaction biotin + L-lysyl-[protein] + ATP = N(6)-biotinyl-L-lysyl-[protein] + AMP + diphosphate + H(+). Its activity is regulated as follows. The switch between the enzymatic activity and the repressor activity is regulated by cellular demand for biotin. The switch occurs by swapping of protein interaction partners by holoBirA. In conditions of high biotin demand, holoBirA associates with apoBCCP to transfer biotin. In conditions of low biotin demand, holoBirA dimerizes, binds DNA and represses transcription of the biotin operon. In terms of biological role, acts both as a biotin--[acetyl-CoA-carboxylase] ligase and a biotin-operon repressor. In the presence of ATP, BirA activates biotin to form the BirA-biotinyl-5'-adenylate (BirA-bio-5'-AMP or holoBirA) complex. HoloBirA can either transfer the biotinyl moiety to the biotin carboxyl carrier protein (BCCP) subunit of acetyl-CoA carboxylase, or bind to the biotin operator site and inhibit transcription of the operon. The sequence is that of Bifunctional ligase/repressor BirA from Escherichia coli (strain K12).